Here is a 190-residue protein sequence, read N- to C-terminus: MILKLVLYDNPILRKKGMPIDSFDDRLKRLVQDMLETMAYYKGVGLAAQQVGLNLQLAVIDVSGSKLSSSLLIGGKPAMVEEHMPLFLINPTLSYTQSKEISNEGCLSFPGLRIDVPRSKRVKVKTFDLEGRPWYFEAGGFLSVAIQHEFDHLQGKLFIDYLSAEQKKAIKEELEKIKRGEAILSVKETD.

Residues Cys-106 and His-148 each contribute to the Fe cation site. Glu-149 is an active-site residue. A Fe cation-binding site is contributed by His-152.

Belongs to the polypeptide deformylase family. Fe(2+) serves as cofactor.

The catalysed reaction is N-terminal N-formyl-L-methionyl-[peptide] + H2O = N-terminal L-methionyl-[peptide] + formate. Removes the formyl group from the N-terminal Met of newly synthesized proteins. Requires at least a dipeptide for an efficient rate of reaction. N-terminal L-methionine is a prerequisite for activity but the enzyme has broad specificity at other positions. The polypeptide is Peptide deformylase (Methylacidiphilum infernorum (isolate V4) (Methylokorus infernorum (strain V4))).